The chain runs to 146 residues: UPF0756 membrane protein PTH_1817 (146 aa).

A run of 4 helical transmembrane segments spans residues Leu6–Ile26, Met46–Trp66, Ile69–Thr89, and Ile105–Val125.

The protein belongs to the UPF0756 family.

The protein localises to the cell membrane. The sequence is that of UPF0756 membrane protein PTH_1817 from Pelotomaculum thermopropionicum (strain DSM 13744 / JCM 10971 / SI).